A 792-amino-acid polypeptide reads, in one-letter code: Putative cellulose synthase-like protein H3 (792 aa).

The next 2 helical transmembrane spans lie at 25–45 (AWML…VRRA) and 55–75 (VGGA…FVWL). A disordered region spans residues 132–154 (GRHVRDDGGPGARAAGGDGEQGA). Gly residues predominate over residues 140–151 (GPGARAAGGDGE). Residues aspartate 181 and aspartate 501 contribute to the active site. 6 helical membrane-spanning segments follow: residues 579 to 599 (VWAV…YCLL), 613 to 632 (FNIT…VEYM), 650 to 670 (IISA…TIGL), 706 to 726 (VFIP…IGTW), 739 to 759 (GPGI…LPFV), and 768 to 788 (YGIP…FLFC).

The protein belongs to the glycosyltransferase 2 family. Plant cellulose synthase-like H subfamily.

It is found in the golgi apparatus membrane. Thought to be a Golgi-localized beta-glycan synthase that polymerize the backbones of noncellulosic polysaccharides (hemicelluloses) of plant cell wall. The chain is Putative cellulose synthase-like protein H3 (CSLH3) from Oryza sativa subsp. japonica (Rice).